The following is a 917-amino-acid chain: Smoothelin (917 aa).

N-acetylalanine is present on Ala-2. Residues Leu-24–Met-89 adopt a coiled-coil conformation. The segment at Glu-157–Ser-456 is disordered. Residues Pro-177–Thr-188 are compositionally biased toward polar residues. 2 stretches are compositionally biased toward low complexity: residues Ala-193 to Thr-210 and Pro-220 to Gly-232. The span at Ser-233–Thr-243 shows a compositional bias: pro residues. The span at Thr-244 to Glu-258 shows a compositional bias: low complexity. Positions Arg-298–Arg-326 are enriched in polar residues. 3 positions are modified to phosphoserine: Ser-299, Ser-301, and Ser-304. Basic and acidic residues predominate over residues Ser-329–Thr-338. Ser-341 carries the post-translational modification Phosphoserine. Residue Thr-351 is modified to Phosphothreonine. Ser-357 carries the phosphoserine modification. 2 positions are modified to phosphothreonine: Thr-360 and Thr-373. Residues Arg-363–Arg-392 show a composition bias toward low complexity. Phosphoserine is present on residues Ser-503, Ser-514, Ser-523, and Ser-576. Disordered regions lie at residues Ala-560–Ala-580 and Gln-617–Met-767. Positions Glu-603–Arg-630 form a coiled coil. Basic and acidic residues predominate over residues Gln-617–Glu-640. Polar residues predominate over residues Asn-676–Ser-689. Over residues Ser-701–Ser-720 the composition is skewed to low complexity. Ser-729 is modified (phosphoserine). Basic and acidic residues predominate over residues Leu-738–Met-750. Ser-792 is modified (phosphoserine). Residues Asn-799 to Arg-906 enclose the Calponin-homology (CH) domain.

Belongs to the smoothelin family. Smooth muscle; contractile or vascular (for the long form).

It is found in the cytoplasm. Its subcellular location is the cytoskeleton. Its function is as follows. Structural protein of the cytoskeleton. The polypeptide is Smoothelin (SMTN) (Homo sapiens (Human)).